The primary structure comprises 388 residues: Glucose-6-phosphate/phosphate translocator 1, chloroplastic (388 aa).

A chloroplast-targeting transit peptide spans 1–65 (MVLSVKQTLS…LRAKSPVVRC (65 aa)). 8 consecutive transmembrane segments (helical) span residues 95–115 (LKIG…NIYN), 129–149 (STLS…VGIV), 158–178 (FWKT…AATV), 211–231 (FPTS…LSAL), 233–253 (ELNF…AFVF), 273–293 (YACL…AVEG), 305–325 (LATV…FYHL), and 363–383 (TPVQ…TFLY). The 118-residue stretch at 112 to 229 (NIYNKKVLNA…IPIIGGCALS (118 aa)) folds into the EamA domain.

This sequence belongs to the TPT transporter family. GPT (TC 2.A.7.9) subfamily. As to expression, expressed in seeds, flowers, rosette leaves, and roots, with highest levels found in stamens. Found in the root cap, in guard cells and in mesophyll cells.

It is found in the plastid. The protein localises to the chloroplast membrane. It localises to the endoplasmic reticulum membrane. The protein resides in the peroxisome membrane. Glucose 6-phosphate (Glc6P) transporter. Also transports inorganic phosphate, 3-phosphoglycerate, triose phosphates and, to a leser extent, phosphoenolpyruvate. Responsible for the transport of Glc6P into plastids of heterotrophic tissues where it can be used as a carbon source for starch biosynthesis, as substrate for fatty acid biosynthesis or as substrate for NADPH generation via the oxidative pentose phosphate pathway (OPPP). Required for pollen maturation and embryo sac development. Preferentially exchanges Glc6P for ribulose-5-phosphate (Ru5P) in reconstituted yeast proteoliposomes. May supply the substrate (Glc6P) for OPPP reactions inside peroxisomes and exchange it with the product Ru5P which leaves the organelle. In Arabidopsis thaliana (Mouse-ear cress), this protein is Glucose-6-phosphate/phosphate translocator 1, chloroplastic.